A 1066-amino-acid polypeptide reads, in one-letter code: Beta-galactosidase (1066 aa).

2 residues coordinate substrate: Asn110 and Asp209. Asp209 contributes to the Na(+) binding site. The Mg(2+) site is built by Glu432, His434, and Glu477. Substrate contacts are provided by residues Glu477 and 553 to 556; that span reads EYAH. Glu477 acts as the Proton donor in catalysis. Glu553 (nucleophile) is an active-site residue. Asn613 lines the Mg(2+) pocket. Na(+)-binding residues include Phe617 and Asn620. The substrate site is built by Asn620 and Trp1041.

The protein belongs to the glycosyl hydrolase 2 family. As to quaternary structure, homotetramer. It depends on Mg(2+) as a cofactor. Na(+) is required as a cofactor.

The enzyme catalyses Hydrolysis of terminal non-reducing beta-D-galactose residues in beta-D-galactosides.. This chain is Beta-galactosidase, found in Yersinia pseudotuberculosis serotype IB (strain PB1/+).